The chain runs to 33 residues: Neutrophil defensin 3 (33 aa).

Intrachain disulfides connect cysteine 3–cysteine 31, cysteine 5–cysteine 20, and cysteine 10–cysteine 30.

Belongs to the alpha-defensin family.

It is found in the secreted. Its function is as follows. Anti-fungal and bactericidal activity, greater against Gram-positive bacteria. This Mesocricetus auratus (Golden hamster) protein is Neutrophil defensin 3.